We begin with the raw amino-acid sequence, 378 residues long: Ribosomal RNA large subunit methyltransferase G (378 aa).

Belongs to the methyltransferase superfamily. RlmG family.

It localises to the cytoplasm. It catalyses the reaction guanosine(1835) in 23S rRNA + S-adenosyl-L-methionine = N(2)-methylguanosine(1835) in 23S rRNA + S-adenosyl-L-homocysteine + H(+). In terms of biological role, specifically methylates the guanine in position 1835 (m2G1835) of 23S rRNA. This is Ribosomal RNA large subunit methyltransferase G from Escherichia coli O157:H7.